A 307-amino-acid polypeptide reads, in one-letter code: Carbamate kinase (307 aa).

It belongs to the carbamate kinase family.

It is found in the cytoplasm. It catalyses the reaction hydrogencarbonate + NH4(+) + ATP = carbamoyl phosphate + ADP + H2O + H(+). It participates in metabolic intermediate metabolism; carbamoyl phosphate degradation; CO(2) and NH(3) from carbamoyl phosphate: step 1/1. In terms of biological role, carbamate kinase involved in the arginine deiminase pathway of fermentative arginine utilization. In Halobacterium salinarum (strain ATCC 700922 / JCM 11081 / NRC-1) (Halobacterium halobium), this protein is Carbamate kinase (arcC).